We begin with the raw amino-acid sequence, 260 residues long: uncharacterized protein (260 aa).

Belongs to the MG032/MG096/MG288 family.

This is an uncharacterized protein from Mycoplasma pneumoniae (strain ATCC 29342 / M129 / Subtype 1) (Mycoplasmoides pneumoniae).